The primary structure comprises 210 residues: Putative O-methyltransferase MSMEG_5073/MSMEI_4947 (210 aa).

Residues Val-37, Glu-59, 61-62 (GT), Ser-67, Asp-85, and Val-86 contribute to the S-adenosyl-L-methionine site. A substrate-binding site is contributed by Asp-133. Residue Asp-135 participates in S-adenosyl-L-methionine binding.

This sequence belongs to the class I-like SAM-binding methyltransferase superfamily. Cation-dependent O-methyltransferase family.

The polypeptide is Putative O-methyltransferase MSMEG_5073/MSMEI_4947 (Mycolicibacterium smegmatis (strain ATCC 700084 / mc(2)155) (Mycobacterium smegmatis)).